We begin with the raw amino-acid sequence, 182 residues long: NAD(P)H-quinone oxidoreductase subunit J (182 aa).

Belongs to the complex I 30 kDa subunit family. As to quaternary structure, NDH-1 can be composed of about 15 different subunits; different subcomplexes with different compositions have been identified which probably have different functions.

The protein localises to the cellular thylakoid membrane. The enzyme catalyses a plastoquinone + NADH + (n+1) H(+)(in) = a plastoquinol + NAD(+) + n H(+)(out). The catalysed reaction is a plastoquinone + NADPH + (n+1) H(+)(in) = a plastoquinol + NADP(+) + n H(+)(out). NDH-1 shuttles electrons from an unknown electron donor, via FMN and iron-sulfur (Fe-S) centers, to quinones in the respiratory and/or the photosynthetic chain. The immediate electron acceptor for the enzyme in this species is believed to be plastoquinone. Couples the redox reaction to proton translocation, and thus conserves the redox energy in a proton gradient. Cyanobacterial NDH-1 also plays a role in inorganic carbon-concentration. The sequence is that of NAD(P)H-quinone oxidoreductase subunit J from Synechococcus sp. (strain WH7803).